Here is a 189-residue protein sequence, read N- to C-terminus: Threonylcarbamoyl-AMP synthase (189 aa).

Residues asparagine 7–lysine 189 form the YrdC-like domain.

It belongs to the SUA5 family. TsaC subfamily.

The protein resides in the cytoplasm. It carries out the reaction L-threonine + hydrogencarbonate + ATP = L-threonylcarbamoyladenylate + diphosphate + H2O. In terms of biological role, required for the formation of a threonylcarbamoyl group on adenosine at position 37 (t(6)A37) in tRNAs that read codons beginning with adenine. Catalyzes the conversion of L-threonine, HCO(3)(-)/CO(2) and ATP to give threonylcarbamoyl-AMP (TC-AMP) as the acyladenylate intermediate, with the release of diphosphate. The polypeptide is Threonylcarbamoyl-AMP synthase (Blochmanniella floridana).